The following is a 179-amino-acid chain: Large ribosomal subunit protein uL6c (179 aa).

The protein belongs to the universal ribosomal protein uL6 family. As to quaternary structure, part of the 50S ribosomal subunit.

It is found in the plastid. Its subcellular location is the cyanelle. Functionally, binds 23S rRNA. This Cyanophora paradoxa protein is Large ribosomal subunit protein uL6c (rpl6).